The chain runs to 401 residues: UDP-GlcNAc:betaGal beta-1,3-N-acetylglucosaminyltransferase 9 (401 aa).

Residues 1–10 (MRRRLRLRRE) are Cytoplasmic-facing. Residues 11–31 (ALLTLLLGATLGLLLYAQQEG) form a helical; Signal-anchor for type II membrane protein membrane-spanning segment. The Lumenal segment spans residues 32-401 (AAPTTSAPRA…VPAGPFQWGP (370 aa)). Residues 33 to 85 (APTTSAPRAQGRAAPGPTPGLRVFQAPDTGAAPPAYEGDTPEPPTPTGPFDFG) form a disordered region. Over residues 38 to 47 (APRAQGRAAP) the composition is skewed to low complexity.

The protein belongs to the glycosyltransferase 31 family.

The protein resides in the golgi apparatus membrane. The sequence is that of UDP-GlcNAc:betaGal beta-1,3-N-acetylglucosaminyltransferase 9 from Bos taurus (Bovine).